The sequence spans 485 residues: P2X purinoceptor 2 (485 aa).

The Cytoplasmic portion of the chain corresponds to 1–43; that stretch reads MAAAQPRLPAGAAMVRRLARGCWSAFWDYETPKVIVVRNRRLG. 6 cysteine pairs are disulfide-bonded: Cys22–Cys443, Cys126–Cys177, Cys137–Cys160, Cys143–Cys171, Cys227–Cys237, and Cys271–Cys280. The helical transmembrane segment at 44-64 threads the bilayer; it reads FVHRMVQLLILLYFVWYVFIV. At 65–339 the chain is on the extracellular side; sequence QKSYQDSETG…IVHGQAGKFS (275 aa). Residues Lys82 and Lys84 each coordinate ATP. N-linked (GlcNAc...) asparagine glycosylation occurs at Asn195. Thr197 is an ATP binding site. Asn252 carries an N-linked (GlcNAc...) asparagine glycan. ATP-binding residues include Ser297, Asn301, and Arg303. Residue Asn311 is glycosylated (N-linked (GlcNAc...) asparagine). Lys321 is a binding site for ATP. The interval 322–335 is pore-forming motif; that stretch reads AYGIRIDVIVHGQA. A helical transmembrane segment spans residues 340–360; sequence LIPTIINLATALTSIGVGSFL. The Cytoplasmic segment spans residues 361–485; the sequence is CDWILLTFMN…STDPKGLAQL (125 aa). A disordered region spans residues 406 to 485; that stretch reads PPPSHYSQDQ…STDPKGLAQL (80 aa). Residues 420–436 are compositionally biased toward low complexity; sequence PSGEGPALGEGAELPLA. Positions 469–478 are enriched in polar residues; sequence PSQQDSTSTD.

Belongs to the P2X receptor family. Homotrimer and heterotrimer; functional P2XRs are organized as homomeric and heteromeric trimers. Homotrimer. Forms heterotrimer with P2XR1. Forms heterotrimer with P2XR3. Forms heterotrimer with P2XR6.

It localises to the cell membrane. It carries out the reaction Ca(2+)(in) = Ca(2+)(out). It catalyses the reaction K(+)(in) = K(+)(out). The enzyme catalyses Na(+)(in) = Na(+)(out). With respect to regulation, fast activation by external ATP. Exhibits slow desensitization during prolonged ATP activation. Not sensitive to the ATP agonist:alpha/beta-methylene-ATP. Its function is as follows. ATP-gated nonselective transmembrane cation channel permeable to potassium, sodium and calcium. Activation by extracellular ATP induces a variety of cellular responses, such as excitatory postsynaptic responses in sensory neurons, neuromuscular junctions (NMJ) formation, hearing, perception of taste and peristalsis. In the inner ear, regulates sound transduction and auditory neurotransmission, outer hair cell electromotility, inner ear gap junctions, and K(+) recycling. Mediates synaptic transmission between neurons and from neurons to smooth muscle. The polypeptide is P2X purinoceptor 2 (P2rx2) (Mus musculus (Mouse)).